We begin with the raw amino-acid sequence, 715 residues long: Glycine--tRNA ligase beta subunit (715 aa).

This sequence belongs to the class-II aminoacyl-tRNA synthetase family. As to quaternary structure, tetramer of two alpha and two beta subunits.

Its subcellular location is the cytoplasm. The catalysed reaction is tRNA(Gly) + glycine + ATP = glycyl-tRNA(Gly) + AMP + diphosphate. This is Glycine--tRNA ligase beta subunit from Nitrosomonas eutropha (strain DSM 101675 / C91 / Nm57).